Consider the following 699-residue polypeptide: Transcription factor MYC2 (699 aa).

The interval 25-60 (PWGAASTPPPPPPPPHHHHQQQQQQVLPPPAAAPAA) is disordered. Residues 93-158 (IDVSTGASLL…AAPDEAVEEE (66 aa)) form a JAZ-interaction domain region. The segment at 290 to 530 (DISVSKPPPP…EPLNHVEAER (241 aa)) is disordered. Positions 306 to 321 (HFENGSTSTLTENPSP) are enriched in polar residues. 2 stretches are compositionally biased toward low complexity: residues 335–349 (PQRQQQQQQSSQAQQ) and 387–412 (SSSGRRNPSPAPPAATASLTTAPGSL). 2 stretches are compositionally biased toward polar residues: residues 413-449 (FSQHTPTLTAAANDAKSNNQKRSMEATSRASNTNNHP) and 459-472 (SFSSAPTTRPSTGT). The span at 478–494 (SESDHSDLEASVREVES) shows a compositional bias: basic and acidic residues. The Nuclear localization signal signature appears at 506–514 (KRPRKRGRK). A compositionally biased stretch (basic residues) spans 507 to 516 (RPRKRGRKPA). The span at 517–530 (NGREEPLNHVEAER) shows a compositional bias: basic and acidic residues. A basic motif; degenerate region spans residues 520–533 (EEPLNHVEAERQRR). In terms of domain architecture, bHLH spans 520 to 569 (EEPLNHVEAERQRREKLNQRFYALRAVVPNVSKMDKASLLGDAISYINEL). Positions 534–569 (EKLNQRFYALRAVVPNVSKMDKASLLGDAISYINEL) are helix-loop-helix motif. The interval 582–611 (TLQSQMESLKKERDARPPAPSGGGGDGGAR) is disordered.

This sequence belongs to the bHLH protein family. Interacts with TIFY3/JAZ1. Highly expressed in spikelets and floral organs.

Its subcellular location is the nucleus. Transcriptional activator involved in jasmonate (JA) signaling pathway during spikelet development. Binds to the G2 region G-box (5'-CACGTG-3') of the MADS1 promoter and thus directly regulates the expression of MADS1. Its function in MADS1 activation is abolished by TIFY3/JAZ1 which directly target MYC2 during spikelet development. This chain is Transcription factor MYC2, found in Oryza sativa subsp. japonica (Rice).